Here is a 456-residue protein sequence, read N- to C-terminus: tRNA modification GTPase MnmE (456 aa).

Positions 21, 85, and 124 each coordinate (6S)-5-formyl-5,6,7,8-tetrahydrofolate. One can recognise a TrmE-type G domain in the interval 220 to 379; sequence QLRIVLYGEP…LLDEIQKKAA (160 aa). N230 contacts K(+). Residues 230–235, 249–255, and 274–277 each bind GTP; these read NTGKSS, SEIPGTT, and DTAG. S234 contributes to the Mg(2+) binding site. K(+) is bound by residues S249, I251, and T254. Position 255 (T255) interacts with Mg(2+). K456 is a binding site for (6S)-5-formyl-5,6,7,8-tetrahydrofolate.

Belongs to the TRAFAC class TrmE-Era-EngA-EngB-Septin-like GTPase superfamily. TrmE GTPase family. As to quaternary structure, homodimer. Heterotetramer of two MnmE and two MnmG subunits. K(+) serves as cofactor.

It is found in the cytoplasm. In terms of biological role, exhibits a very high intrinsic GTPase hydrolysis rate. Involved in the addition of a carboxymethylaminomethyl (cmnm) group at the wobble position (U34) of certain tRNAs, forming tRNA-cmnm(5)s(2)U34. In Leptospira borgpetersenii serovar Hardjo-bovis (strain JB197), this protein is tRNA modification GTPase MnmE.